A 96-amino-acid chain; its full sequence is MEHKEVVLLLLLFLKSGQGEPLDDYVNAQGASLFSVTKKQLGAGSREECAAKCEEDKEFTCRAFQYHSKEQQCVIMAENKKSSIIIRMRDVVLFEK.

The first 19 residues, 1–19, serve as a signal peptide directing secretion; sequence MEHKEVVLLLLLFLKSGQG. One can recognise a PAN domain in the interval 20–96; the sequence is EPLDDYVNAQ…RMRDVVLFEK (77 aa). Cystine bridges form between C49-C73 and C53-C61.

As to expression, expressed in liver.

Its subcellular location is the secreted. Its function is as follows. May bind non-covalently to lysine binding sites present in the kringle structures of plasminogen. This may interfere with the binding of fibrin or alpha-2-antiplasmin to plasminogen and may result in the localization of activity at sites necessary for extracellular matrix destruction. This is Plasminogen-like protein A (PLGLA) from Homo sapiens (Human).